Reading from the N-terminus, the 308-residue chain is Ornithine carbamoyltransferase (308 aa).

Residues 56–59 (STRT), Q83, R107, and 134–137 (HPCQ) each bind carbamoyl phosphate. Residues N165, D225, and 229–230 (SM) contribute to the L-ornithine site. Residues 264-265 (CL) and R292 each bind carbamoyl phosphate.

Belongs to the aspartate/ornithine carbamoyltransferase superfamily. OTCase family.

Its subcellular location is the cytoplasm. The enzyme catalyses carbamoyl phosphate + L-ornithine = L-citrulline + phosphate + H(+). Its pathway is amino-acid biosynthesis; L-arginine biosynthesis; L-arginine from L-ornithine and carbamoyl phosphate: step 1/3. In terms of biological role, reversibly catalyzes the transfer of the carbamoyl group from carbamoyl phosphate (CP) to the N(epsilon) atom of ornithine (ORN) to produce L-citrulline. This is Ornithine carbamoyltransferase from Nitrobacter winogradskyi (strain ATCC 25391 / DSM 10237 / CIP 104748 / NCIMB 11846 / Nb-255).